A 389-amino-acid polypeptide reads, in one-letter code: Succinate--CoA ligase [ADP-forming] subunit beta (389 aa).

One can recognise an ATP-grasp domain in the interval 9–244 (KKLFADYGLP…LTQEDPREAE (236 aa)). ATP is bound by residues Lys-46, 53–55 (GRG), Glu-99, Ala-102, and Glu-107. Residues Asn-199 and Asp-213 each contribute to the Mg(2+) site. Residues Asn-264 and 321 to 323 (GIV) each bind substrate.

Belongs to the succinate/malate CoA ligase beta subunit family. Heterotetramer of two alpha and two beta subunits. Mg(2+) serves as cofactor.

The enzyme catalyses succinate + ATP + CoA = succinyl-CoA + ADP + phosphate. It catalyses the reaction GTP + succinate + CoA = succinyl-CoA + GDP + phosphate. The protein operates within carbohydrate metabolism; tricarboxylic acid cycle; succinate from succinyl-CoA (ligase route): step 1/1. Its function is as follows. Succinyl-CoA synthetase functions in the citric acid cycle (TCA), coupling the hydrolysis of succinyl-CoA to the synthesis of either ATP or GTP and thus represents the only step of substrate-level phosphorylation in the TCA. The beta subunit provides nucleotide specificity of the enzyme and binds the substrate succinate, while the binding sites for coenzyme A and phosphate are found in the alpha subunit. This Histophilus somni (strain 2336) (Haemophilus somnus) protein is Succinate--CoA ligase [ADP-forming] subunit beta.